The chain runs to 478 residues: Glycogen synthase (478 aa).

Lys15 contacts ADP-alpha-D-glucose.

This sequence belongs to the glycosyltransferase 1 family. Bacterial/plant glycogen synthase subfamily.

It carries out the reaction [(1-&gt;4)-alpha-D-glucosyl](n) + ADP-alpha-D-glucose = [(1-&gt;4)-alpha-D-glucosyl](n+1) + ADP + H(+). The protein operates within glycan biosynthesis; glycogen biosynthesis. In terms of biological role, synthesizes alpha-1,4-glucan chains using ADP-glucose. This Acholeplasma laidlawii (strain PG-8A) protein is Glycogen synthase.